The primary structure comprises 741 residues: Phosphoribosylformylglycinamidine synthase subunit PurL (741 aa).

His53 is a catalytic residue. ATP-binding residues include Tyr56 and Lys95. Residue Glu97 participates in Mg(2+) binding. Substrate contacts are provided by residues 98–101 (SHNH) and Arg120. His99 acts as the Proton acceptor in catalysis. Asp121 contacts Mg(2+). Gln244 is a substrate binding site. Mg(2+) is bound at residue Asp274. 318–320 (ESQ) contributes to the substrate binding site. Asp501 and Gly538 together coordinate ATP. Asn539 is a Mg(2+) binding site. Ser541 serves as a coordination point for substrate.

It belongs to the FGAMS family. In terms of assembly, monomer. Part of the FGAM synthase complex composed of 1 PurL, 1 PurQ and 2 PurS subunits.

The protein resides in the cytoplasm. The catalysed reaction is N(2)-formyl-N(1)-(5-phospho-beta-D-ribosyl)glycinamide + L-glutamine + ATP + H2O = 2-formamido-N(1)-(5-O-phospho-beta-D-ribosyl)acetamidine + L-glutamate + ADP + phosphate + H(+). It participates in purine metabolism; IMP biosynthesis via de novo pathway; 5-amino-1-(5-phospho-D-ribosyl)imidazole from N(2)-formyl-N(1)-(5-phospho-D-ribosyl)glycinamide: step 1/2. Part of the phosphoribosylformylglycinamidine synthase complex involved in the purines biosynthetic pathway. Catalyzes the ATP-dependent conversion of formylglycinamide ribonucleotide (FGAR) and glutamine to yield formylglycinamidine ribonucleotide (FGAM) and glutamate. The FGAM synthase complex is composed of three subunits. PurQ produces an ammonia molecule by converting glutamine to glutamate. PurL transfers the ammonia molecule to FGAR to form FGAM in an ATP-dependent manner. PurS interacts with PurQ and PurL and is thought to assist in the transfer of the ammonia molecule from PurQ to PurL. This is Phosphoribosylformylglycinamidine synthase subunit PurL from Ligilactobacillus salivarius (strain UCC118) (Lactobacillus salivarius).